The following is a 281-amino-acid chain: Large ribosomal subunit protein uL22 (281 aa).

The segment at 1–225 (MASPMGSTAS…KAGGAAEAEV (225 aa)) is large ribosomal subunit protein uL22. 2 disordered regions span residues 137–175 (RATKKAVPKGARHRRRLTGAGKPAASAATETPAAQPVAA) and 199–281 (AVAS…GGTR). A compositionally biased stretch (basic residues) spans 139–153 (TKKAVPKGARHRRRL). Composition is skewed to low complexity over residues 159-175 (PAASAATETPAAQPVAA) and 199-239 (AVAS…APAA). The unknown stretch occupies residues 226–281 (ATTDEQTTETAPAAEAEKPAVRRPAARKSTTSARRRAAETEGHDSDAESTDEGGTR). A compositionally biased stretch (basic and acidic residues) spans 261–271 (RAAETEGHDSD). Positions 272 to 281 (AESTDEGGTR) are enriched in acidic residues.

It belongs to the universal ribosomal protein uL22 family. Part of the 50S ribosomal subunit.

In terms of biological role, the globular domain of the protein is located near the polypeptide exit tunnel on the outside of the subunit, while an extended beta-hairpin is found that lines the wall of the exit tunnel in the center of the 70S ribosome. Its function is as follows. This protein binds specifically to 23S rRNA; its binding is stimulated by other ribosomal proteins, e.g. L4, L17, and L20. It is important during the early stages of 50S assembly. It makes multiple contacts with different domains of the 23S rRNA in the assembled 50S subunit and ribosome. The sequence is that of Large ribosomal subunit protein uL22 from Acidothermus cellulolyticus (strain ATCC 43068 / DSM 8971 / 11B).